The following is a 470-amino-acid chain: UDP-N-acetylmuramoylalanine--D-glutamate ligase (470 aa).

Residue 121–127 participates in ATP binding; that stretch reads GTNGKST.

The protein belongs to the MurCDEF family.

It localises to the cytoplasm. The catalysed reaction is UDP-N-acetyl-alpha-D-muramoyl-L-alanine + D-glutamate + ATP = UDP-N-acetyl-alpha-D-muramoyl-L-alanyl-D-glutamate + ADP + phosphate + H(+). The protein operates within cell wall biogenesis; peptidoglycan biosynthesis. In terms of biological role, cell wall formation. Catalyzes the addition of glutamate to the nucleotide precursor UDP-N-acetylmuramoyl-L-alanine (UMA). This chain is UDP-N-acetylmuramoylalanine--D-glutamate ligase, found in Rhizobium etli (strain ATCC 51251 / DSM 11541 / JCM 21823 / NBRC 15573 / CFN 42).